The chain runs to 282 residues: 5'-nucleotidase SurE (282 aa).

A divalent metal cation contacts are provided by D12, D13, S43, and N98.

Belongs to the SurE nucleotidase family. A divalent metal cation serves as cofactor.

The protein resides in the cytoplasm. It catalyses the reaction a ribonucleoside 5'-phosphate + H2O = a ribonucleoside + phosphate. Functionally, nucleotidase that shows phosphatase activity on nucleoside 5'-monophosphates. This Hyperthermus butylicus (strain DSM 5456 / JCM 9403 / PLM1-5) protein is 5'-nucleotidase SurE.